Here is a 321-residue protein sequence, read N- to C-terminus: ATP-dependent 6-phosphofructokinase (321 aa).

Gly-12 provides a ligand contact to ATP. ADP-binding positions include 22–26 and 55–60; these read RGVVR and RYSVSD. ATP-binding positions include 73–74 and 103–106; these read RF and GDGS. Asp-104 contacts Mg(2+). Residue 127–129 participates in substrate binding; the sequence is TID. The active-site Proton acceptor is Asp-129. Arg-156 lines the ADP pocket. Residues Arg-164 and 171 to 173 contribute to the substrate site; that span reads MGR. ADP is bound by residues 187 to 189, Arg-213, and 215 to 217; these read GCE and KRH. Substrate contacts are provided by residues Glu-224, Arg-245, and 251-254; that span reads HIQR.

This sequence belongs to the phosphofructokinase type A (PFKA) family. ATP-dependent PFK group I subfamily. Prokaryotic clade 'B1' sub-subfamily. In terms of assembly, homotetramer. Requires Mg(2+) as cofactor.

The protein resides in the cytoplasm. The enzyme catalyses beta-D-fructose 6-phosphate + ATP = beta-D-fructose 1,6-bisphosphate + ADP + H(+). The protein operates within carbohydrate degradation; glycolysis; D-glyceraldehyde 3-phosphate and glycerone phosphate from D-glucose: step 3/4. Its activity is regulated as follows. Allosterically activated by ADP and other diphosphonucleosides, and allosterically inhibited by phosphoenolpyruvate. In terms of biological role, catalyzes the phosphorylation of D-fructose 6-phosphate to fructose 1,6-bisphosphate by ATP, the first committing step of glycolysis. The sequence is that of ATP-dependent 6-phosphofructokinase from Haemophilus influenzae (strain PittEE).